The primary structure comprises 623 residues: Phosphatidylinositol-3-phosphatase SAC1 (623 aa).

The Cytoplasmic portion of the chain corresponds to 1 to 523 (MTGPIVYVQN…SPFPDRRPVY (523 aa)). In terms of domain architecture, SAC spans 115 to 454 (LELHLKNSTF…ADAVSVAYSG (340 aa)). Glycyl lysine isopeptide (Lys-Gly) (interchain with G-Cter in ubiquitin) cross-links involve residues Lys246 and Lys358. Residues 524 to 544 (IQLIPMIICAALTVLGATIFF) form a helical membrane-spanning segment. Over 545–552 (PKDRFTSS) the chain is Lumenal. Residues 553-573 (KNLLYFAGASIVLALSTKFMF) traverse the membrane as a helical segment. The Cytoplasmic portion of the chain corresponds to 574-623 (KNGIQFVNWPKLVDVGFLVVHQTHDKEQQFKGLKYAQSPKFSKPDPLKRD).

As to quaternary structure, component of the SPOTS complex, at least composed of LCB1/2 (LCB1 and/or LCB2), ORM1/2 (ORM1 and/or ORM2), SAC1 and TSC3.

Its subcellular location is the endoplasmic reticulum membrane. The protein localises to the golgi apparatus membrane. The catalysed reaction is a 1,2-diacyl-sn-glycero-3-phospho-(1D-myo-inositol-3-phosphate) + H2O = a 1,2-diacyl-sn-glycero-3-phospho-(1D-myo-inositol) + phosphate. It carries out the reaction a 1,2-diacyl-sn-glycero-3-phospho-(1D-myo-inositol 4-phosphate) + H2O = a 1,2-diacyl-sn-glycero-3-phospho-(1D-myo-inositol) + phosphate. Phosphoinositide phosphatase which catalyzes the hydrolysis of phosphatidylinositol 3-phosphate (PtdIns(3)P) and phosphatidylinositol 4-phosphate (PtdIns(4)P). Has low activity towards phosphatidylinositol-3,5-bisphosphate (PtdIns(3,5)P2). May be involved in the coordination of the activities of the secretory pathway and the actin cytoskeleton. The sequence is that of Phosphatidylinositol-3-phosphatase SAC1 (SAC1) from Saccharomyces cerevisiae (strain ATCC 204508 / S288c) (Baker's yeast).